Consider the following 213-residue polypeptide: ATP phosphoribosyltransferase (213 aa).

The protein belongs to the ATP phosphoribosyltransferase family. Short subfamily. As to quaternary structure, heteromultimer composed of HisG and HisZ subunits.

The protein resides in the cytoplasm. The enzyme catalyses 1-(5-phospho-beta-D-ribosyl)-ATP + diphosphate = 5-phospho-alpha-D-ribose 1-diphosphate + ATP. Its pathway is amino-acid biosynthesis; L-histidine biosynthesis; L-histidine from 5-phospho-alpha-D-ribose 1-diphosphate: step 1/9. Functionally, catalyzes the condensation of ATP and 5-phosphoribose 1-diphosphate to form N'-(5'-phosphoribosyl)-ATP (PR-ATP). Has a crucial role in the pathway because the rate of histidine biosynthesis seems to be controlled primarily by regulation of HisG enzymatic activity. In Bacillus velezensis (strain DSM 23117 / BGSC 10A6 / LMG 26770 / FZB42) (Bacillus amyloliquefaciens subsp. plantarum), this protein is ATP phosphoribosyltransferase.